We begin with the raw amino-acid sequence, 584 residues long: Isopropyl malate synthase htyA (584 aa).

The region spanning 39–317 is the Pyruvate carboxyltransferase domain; it reads PIWLSTDLRD…ETGLDFSNLP (279 aa).

The protein belongs to the alpha-IPM synthase/homocitrate synthase family. LeuA type 2 subfamily.

It catalyses the reaction 3-methyl-2-oxobutanoate + acetyl-CoA + H2O = (2S)-2-isopropylmalate + CoA + H(+). The protein operates within antifungal biosynthesis. Its function is as follows. Isopropyl malate synthase; part of the gene cluster that mediates the de novo generation of L-homotyrosine from acetyl-CoA and 4-hydroxyphenyl-pyruvate. L-homotyrosine is a building block of echinocandin B, a fungal lipidated cyclic hexapeptide that acts as an antifungal agent. L-homotyrosine 4-hydroxyphenyl-pyruvate first undergoes an aldol-type condensation by htyA with the C-2 of acetyl-CoA followed by the release of CoA to form 2-(4-hydroxybenzyl)-malate. This is followed by isomerization of 2-(4-hydroxy-benzyl)-malate to 3-(4-hydroxybenzyl)-malate by htyD. Thereafter, 3-(4-hydroxybenzyl)-malate undergoes decarboxylation and oxidation to form 2-oxo-4-(4-hydroxybenzyl)butanoic acid, coupled to reduction of NAD(+) to NADH by htyC. The product then undergoes transamination catalyzed by htyB to form L-homotyrosine. The chain is Isopropyl malate synthase htyA from Aspergillus rugulosus (Emericella rugulosa).